Here is a 2367-residue protein sequence, read N- to C-terminus: RNA1 polyprotein (2367 aa).

Residues 587-1194 (AKCEDLAVVS…GGRLLLILCS (608 aa)) are Cytoplasmic-facing. In terms of domain architecture, SF3 helicase spans 776-940 (ELRTLRNDMA…AGVAFNPHDS (165 aa)). 804–811 (GPPGVGKT) lines the ATP pocket. Residues 1195 to 1215 (CMLLGIACYTFFNALAILIGG) form a helical membrane-spanning segment. Residues 1216–1235 (TSVAAGAAAMVDIGACGSTS) lie on the Lumenal side of the membrane. Positions 1258–1468 (PAVWSEETGH…YVCKFPHIEV (211 aa)) constitute a Peptidase C3 domain. Active-site for picornain 3C-like protease activity residues include His-1302, Glu-1339, and Cys-1432. Positions 1832–1957 (DKMYCCDYSK…GIHPNIESAF (126 aa)) constitute a RdRp catalytic domain.

Belongs to the nepoviruses RNA1 polyprotein family. In terms of processing, specific enzymatic cleavages by picornain 3C-like protease in vivo yield mature proteins. Picornain 3C-like protease is autocatalytically processed. VPg is uridylylated by the polymerase and is covalently linked to the 5'-end of genomic RNA. This uridylylated form acts as a nucleotide-peptide primer for the polymerase.

It localises to the host endoplasmic reticulum lumen. The protein resides in the host endoplasmic reticulum membrane. The catalysed reaction is RNA(n) + a ribonucleoside 5'-triphosphate = RNA(n+1) + diphosphate. Picornain 3C-like protease is a thiol protease that cleaves the P1 and P2 polyproteins. The polypeptide is RNA1 polyprotein (Fragaria vesca (Woodland strawberry)).